A 101-amino-acid chain; its full sequence is Large ribosomal subunit protein uL23 (101 aa).

It belongs to the universal ribosomal protein uL23 family. In terms of assembly, part of the 50S ribosomal subunit. Contacts protein L29, and trigger factor when it is bound to the ribosome.

Functionally, one of the early assembly proteins it binds 23S rRNA. One of the proteins that surrounds the polypeptide exit tunnel on the outside of the ribosome. Forms the main docking site for trigger factor binding to the ribosome. The sequence is that of Large ribosomal subunit protein uL23 from Tolumonas auensis (strain DSM 9187 / NBRC 110442 / TA 4).